A 399-amino-acid chain; its full sequence is Putative cytochrome P450 133B2 (399 aa).

Cys348 is a heme binding site.

This sequence belongs to the cytochrome P450 family. Heme is required as a cofactor.

In Xylella fastidiosa (strain Temecula1 / ATCC 700964), this protein is Putative cytochrome P450 133B2 (cyp133B2).